A 239-amino-acid chain; its full sequence is Chlorate reductase subunit gamma (239 aa).

Residues methionine 1–alanine 27 form the signal peptide. Heme b contacts are provided by histidine 74 and methionine 138.

As to quaternary structure, heterotrimer of alpha, beta and gamma subunits. It depends on heme b as a cofactor.

It is found in the periplasm. Its function is as follows. May transfer electrons to the iron-sulfur centers of ClrB. The polypeptide is Chlorate reductase subunit gamma (clrC) (Ideonella dechloratans).